A 552-amino-acid polypeptide reads, in one-letter code: CTP synthase (552 aa).

The tract at residues 1-267 (MSKFVFVTGG…AHQTLELLRM (267 aa)) is amidoligase domain. Residue S13 coordinates CTP. A UTP-binding site is contributed by S13. ATP-binding positions include 14 to 19 (SIGKGI) and D71. Positions 71 and 141 each coordinate Mg(2+). CTP-binding positions include 148 to 150 (DIE), 188 to 193 (KTKPTQ), and K224. Residues 188 to 193 (KTKPTQ) and K224 contribute to the UTP site. In terms of domain architecture, Glutamine amidotransferase type-1 spans 292–534 (TVALVGKYVQ…INAVLKRRNA (243 aa)). G354 contributes to the L-glutamine binding site. Residue C381 is the Nucleophile; for glutamine hydrolysis of the active site. L-glutamine is bound by residues 382 to 385 (LGMQ), E405, and R462. Catalysis depends on residues H507 and E509.

The protein belongs to the CTP synthase family. As to quaternary structure, homotetramer.

It catalyses the reaction UTP + L-glutamine + ATP + H2O = CTP + L-glutamate + ADP + phosphate + 2 H(+). The catalysed reaction is L-glutamine + H2O = L-glutamate + NH4(+). It carries out the reaction UTP + NH4(+) + ATP = CTP + ADP + phosphate + 2 H(+). The protein operates within pyrimidine metabolism; CTP biosynthesis via de novo pathway; CTP from UDP: step 2/2. Its activity is regulated as follows. Allosterically activated by GTP, when glutamine is the substrate; GTP has no effect on the reaction when ammonia is the substrate. The allosteric effector GTP functions by stabilizing the protein conformation that binds the tetrahedral intermediate(s) formed during glutamine hydrolysis. Inhibited by the product CTP, via allosteric rather than competitive inhibition. Its function is as follows. Catalyzes the ATP-dependent amination of UTP to CTP with either L-glutamine or ammonia as the source of nitrogen. Regulates intracellular CTP levels through interactions with the four ribonucleotide triphosphates. The sequence is that of CTP synthase from Synechocystis sp. (strain ATCC 27184 / PCC 6803 / Kazusa).